The following is a 178-amino-acid chain: Protein GrpE (178 aa).

Positions 1–11 are enriched in pro residues; it reads MSENQNPPPSP. Residues 1 to 23 are disordered; the sequence is MSENQNPPPSPEEIEAAMSANAA.

This sequence belongs to the GrpE family. As to quaternary structure, homodimer.

The protein resides in the cytoplasm. Its function is as follows. Participates actively in the response to hyperosmotic and heat shock by preventing the aggregation of stress-denatured proteins, in association with DnaK and GrpE. It is the nucleotide exchange factor for DnaK and may function as a thermosensor. Unfolded proteins bind initially to DnaJ; upon interaction with the DnaJ-bound protein, DnaK hydrolyzes its bound ATP, resulting in the formation of a stable complex. GrpE releases ADP from DnaK; ATP binding to DnaK triggers the release of the substrate protein, thus completing the reaction cycle. Several rounds of ATP-dependent interactions between DnaJ, DnaK and GrpE are required for fully efficient folding. The sequence is that of Protein GrpE from Acidovorax sp. (strain JS42).